Here is a 244-residue protein sequence, read N- to C-terminus: MAPNHGALLYEGKAKRVYYTDNSDEFLVHFKNDATAFNAKKHAQLEGKGSLNCEISTEIFKLLERNGIATHFLNLEDDCWMLVQRVDVIPIEIVIRNIASGSLCKQTPIAPGTELSRPLMDLYLKDDVLEDPLLTEERIDLLNLLSSSQRKEIQRLSLRVNDCLKEFMKGLDLLLVDFKLEMGFNGSGQLLIADEISPDSCRIWDLKTNDQDDRILDKDRFRKDLGGVLEGYSEILRRIKAFNS.

The protein belongs to the SAICAR synthetase family.

It carries out the reaction 5-amino-1-(5-phospho-D-ribosyl)imidazole-4-carboxylate + L-aspartate + ATP = (2S)-2-[5-amino-1-(5-phospho-beta-D-ribosyl)imidazole-4-carboxamido]succinate + ADP + phosphate + 2 H(+). It functions in the pathway purine metabolism; IMP biosynthesis via de novo pathway; 5-amino-1-(5-phospho-D-ribosyl)imidazole-4-carboxamide from 5-amino-1-(5-phospho-D-ribosyl)imidazole-4-carboxylate: step 1/2. This chain is Phosphoribosylaminoimidazole-succinocarboxamide synthase, found in Prochlorococcus marinus (strain SARG / CCMP1375 / SS120).